The chain runs to 529 residues: Tyrosine-protein kinase Fgr (529 aa).

Gly2 carries the N-myristoyl glycine lipid modification. S-palmitoyl cysteine attachment occurs at residues Cys3 and Cys6. Tyr34 bears the Phosphotyrosine mark. An SH3 domain is found at 77–138 (IGVTLFIALY…PSNYVAPVDS (62 aa)). The SH2 domain maps to 144-241 (WYFGKIGRKD…GLCNLLIAPC (98 aa)). Tyr208 carries the post-translational modification Phosphotyrosine. Ser218 is subject to Phosphoserine. In terms of domain architecture, Protein kinase spans 263-516 (ITLERRLGTG…YLQSFLEDYF (254 aa)). ATP is bound by residues 269 to 277 (LGTGCFGDV) and Lys291. The Proton acceptor role is filled by Asp382. Tyr412 is subject to Phosphotyrosine. Tyr523 carries the post-translational modification Phosphotyrosine; by SRC.

Belongs to the protein kinase superfamily. Tyr protein kinase family. SRC subfamily. In terms of assembly, interacts with ITGB1, ITGB2, MS4A2/FCER1B, FCER1G, FCGR2A and/or FCGR2B. Interacts (via SH2 domain) with SYK (tyrosine phosphorylated). Interacts (via SH2 domain) with FLT3 (tyrosine phosphorylated). Interacts with PTK2/FAK1. Interacts (via SH2 domain) with HCLS1 (tyrosine phosphorylated by SYK). Interacts with SIRPA and PTPNS1. Interacts (not phosphorylated on tyrosine residues) with CBL; FGR tyrosine phosphorylation promotes dissociation. Interacts with PIK3R1 and FASLG. Interacts with CLNK. Ubiquitinated. Becomes ubiquitinated in response to ITGB2 signaling; this does not lead to degradation. In terms of processing, phosphorylated. Autophosphorylated on tyrosine residues. Becomes phosphorylated in response to FCGR2A and/or FCGR2B engagement, cell adhesion and signaling by ITGB2. Prior phosphorylation at Tyr-523 by SRC inhibits ulterior autophosphorylation at Tyr-412. In terms of tissue distribution, detected in neutrophils, monocytes and natural killer cells (at protein level). Detected in monocytes and large lymphocytes.

The protein resides in the cell membrane. It is found in the cell projection. The protein localises to the ruffle membrane. Its subcellular location is the cytoplasm. It localises to the cytosol. The protein resides in the cytoskeleton. It is found in the mitochondrion inner membrane. The protein localises to the mitochondrion intermembrane space. It carries out the reaction L-tyrosyl-[protein] + ATP = O-phospho-L-tyrosyl-[protein] + ADP + H(+). Its activity is regulated as follows. Activated by autophosphorylation. Prior phosphorylation at Tyr-523 by SRC inhibits ulterior autophosphorylation at Tyr-412. Activated by phorbol myristate acetate, phosphatidic acid and poly-Lys. Binding (via SH2 domain) of HCLS1 that is already phosphorylated by SYK strongly increases kinase activity. In terms of biological role, non-receptor tyrosine-protein kinase that transmits signals from cell surface receptors devoid of kinase activity and contributes to the regulation of immune responses, including neutrophil, monocyte, macrophage and mast cell functions, cytoskeleton remodeling in response to extracellular stimuli, phagocytosis, cell adhesion and migration. Promotes mast cell degranulation, release of inflammatory cytokines and IgE-mediated anaphylaxis. Acts downstream of receptors that bind the Fc region of immunoglobulins, such as MS4A2/FCER1B, FCGR2A and/or FCGR2B. Acts downstream of ITGB1 and ITGB2, and regulates actin cytoskeleton reorganization, cell spreading and adhesion. Depending on the context, activates or inhibits cellular responses. Functions as a negative regulator of ITGB2 signaling, phagocytosis and SYK activity in monocytes. Required for normal ITGB1 and ITGB2 signaling, normal cell spreading and adhesion in neutrophils and macrophages. Functions as a positive regulator of cell migration and regulates cytoskeleton reorganization via RAC1 activation. Phosphorylates SYK (in vitro) and promotes SYK-dependent activation of AKT1 and MAP kinase signaling. Phosphorylates PLD2 in antigen-stimulated mast cells, leading to PLD2 activation and the production of the signaling molecules lysophosphatidic acid and diacylglycerol. Promotes activation of PIK3R1. Phosphorylates FASLG, and thereby regulates its ubiquitination and subsequent internalization. Phosphorylates ABL1. Promotes phosphorylation of CBL, CTTN, PIK3R1, PTK2/FAK1, PTK2B/PYK2 and VAV2. Phosphorylates HCLS1 that has already been phosphorylated by SYK, but not unphosphorylated HCLS1. Together with CLNK, it acts as a negative regulator of natural killer cell-activating receptors and inhibits interferon-gamma production. The chain is Tyrosine-protein kinase Fgr (FGR) from Homo sapiens (Human).